A 75-amino-acid chain; its full sequence is Small ribosomal subunit protein bS18 (75 aa).

This sequence belongs to the bacterial ribosomal protein bS18 family. As to quaternary structure, part of the 30S ribosomal subunit. Forms a tight heterodimer with protein bS6.

Binds as a heterodimer with protein bS6 to the central domain of the 16S rRNA, where it helps stabilize the platform of the 30S subunit. This chain is Small ribosomal subunit protein bS18, found in Methylobacillus flagellatus (strain ATCC 51484 / DSM 6875 / VKM B-1610 / KT).